Here is a 355-residue protein sequence, read N- to C-terminus: MKTTHRIYFKNSADMNELKDKSINLVVTSPPYPMVEIWDRLFSELNPKIEETLIDEEDGLRSYNLMHEELEKVWHEVDRVTAPGGVVIINIGDATRKIGKKFQLYPNHVRTIDFFFDRGYQVLPFIIWRKQSNKPTKFMGSGMLPPNAYVTHEHEYILIFRKEGPRQFKTEEERKLRRESAYFWEERNQWFSDVWTDLTGVSQRLNHKNLRKRAAAYPFELAYRLINMYSIMGDWVLDPFLGTGTTMIAAACAGRNSIGYELDHNFKDLIESRINETLKLSNEIVMRRINDHIEFIREKNGKYYSENYKFKVTTRQEQDIRLYYPRTYKKIKNNEFEFFYQEVNPKKERQSKLNI.

Belongs to the N(4)/N(6)-methyltransferase family. N(4) subfamily.

The enzyme catalyses a 2'-deoxycytidine in DNA + S-adenosyl-L-methionine = an N(4)-methyl-2'-deoxycytidine in DNA + S-adenosyl-L-homocysteine + H(+). Its function is as follows. A beta subtype methylase that recognizes the double-stranded sequence 5'-CTAG-3', methylates C-1 on both strands, and protects the DNA from cleavage by the MthZI endonuclease. The polypeptide is Type II methyltransferase M.MthZI (Methanothermobacter thermautotrophicus (Methanobacterium thermoformicicum)).